A 152-amino-acid polypeptide reads, in one-letter code: Snaclec coagulation factor IX/factor X-binding protein subunit A (152 aa).

A signal peptide spans 1–23 (MGRFIFVSFGLLVVAASLSGTGA). 3 cysteine pairs are disulfide-bonded: Cys-25-Cys-36, Cys-53-Cys-150, and Cys-125-Cys-142. The C-type lectin domain maps to 32 to 151 (YEGHCYKAFE…CGQRIPFVCE (120 aa)). Positions 64, 66, and 70 each coordinate Ca(2+). A Ca(2+)-binding site is contributed by Glu-151.

Belongs to the snaclec family. In terms of assembly, heterodimer of subunits A and B; disulfide-linked. In terms of tissue distribution, expressed by the venom gland.

It localises to the secreted. In terms of biological role, anticoagulant protein which binds to the gamma-carboxyglutamic acid-domain regions of factors IX (F9) and factor X (F10) in the presence of calcium with a 1 to 1 stoichiometry. This is Snaclec coagulation factor IX/factor X-binding protein subunit A from Trimeresurus stejnegeri (Chinese green tree viper).